A 674-amino-acid chain; its full sequence is Pannexin-2 (674 aa).

Over 11–53 (MATALLAGEKLRELILPGSQDDKAGALAALLLQLKLELPFDRV) the chain is Cytoplasmic. A helical membrane pass occupies residues 54–74 (VTIGTVLVPILLVTLVFTKNF). Over 75–125 (AEEPIYCYTPHNFTRDQALYARGYCWTELRDALPGVDASLWPSLFEHKFLP) the chain is Extracellular. N-linked (GlcNAc...) asparagine glycosylation is present at Asn-86. The chain crosses the membrane as a helical span at residues 126 to 146 (YALLAFAAIMYVPALGWEFLA). The Cytoplasmic portion of the chain corresponds to 147 to 230 (STRLTSELNF…NFLAKLYLAR (84 aa)). A helical transmembrane segment spans residues 231 to 251 (HVLILLLSVVPISYLCTYYAT). Over 252-295 (QKQNEFTCALGASPDGPVGSAGPTVRVSCKLPSVQLQRIIAGVD) the chain is Extracellular. Residues 296 to 316 (IVLLCFMNLIILVNLIHLFIF) form a helical membrane-spanning segment. Over 317–674 (RKSNFIFDKL…PRTVVSTVEF (358 aa)) the chain is Cytoplasmic. Residues 394-408 (TTPTVRDSGIQTVDP) are compositionally biased toward polar residues. 2 disordered regions span residues 394–426 (TTPTVRDSGIQTVDPSINPAEPEGSAEPPVVKR) and 485–510 (AHHYKGSGGDTGPSSAPPAASEKKHT). Ser-590 and Ser-601 each carry phosphoserine.

Belongs to the pannexin family. As to quaternary structure, forms PANX1/PANX2-heteromeric intercellular channels on coexpression in paired Xenopus oocytes. Does not form homomeric channels. In terms of processing, S-palmitoylated in neural stem and progenitor cells. Cleaved by CASP3 and CASP7 during apoptosis. Cleavage has no effect on it function. In terms of tissue distribution, expressed in the eye, thyroid, prostate, kidney and liver. Abundantly expressed in the CNS, including hippocampus, olfactory bulb, cortex, cerebellum. Not detected in the white matter.

It is found in the cell membrane. The protein localises to the golgi apparatus membrane. Its subcellular location is the endoplasmic reticulum membrane. Functionally, structural component of the gap junctions and the hemichannels. This is Pannexin-2 (Panx2) from Rattus norvegicus (Rat).